A 618-amino-acid chain; its full sequence is MATVINPPRDPNTLSNYNNWVSIHITANFDILFDQKKLAGNVVHRFRSTTRGESRDIILDTNHLDIGGVKVNGQPSSWEFLPRLEPYGTPLKIKLDQAVELDETIEVDISVTTTEKCTALQWLTPAQTSNKKHPYMFSQCQAIHARSIFPCQDTPDVKCTLDFNITSPLPVIASGLPVRKQPETSKSEGKSLYQFHQKVPIPSYLFALASGDISEASIGPRSVVATSPDKLRECQWELEADTEKFINAIEKIVYPYVWGEYNVLILPPSFPYGGMENPIFTFATPSIISKDRENIDVIAHELAHSWSGNLVTNASWEHFWLNEGWTTYLERRVSDASVHGEPYRHFSAIIGWKALTDSMDHFGHDHDFTKLITNLKGKDPDDAFSSIPYEKGFNFLYYLETLVGKSKFDDFIPHYFNKFKGKSLDSYEFKATILDFFQADSEAAKALNEVDWDKWFYAPGLPPKPDFDTSLVDVVYDLAKKWLSLPGSSFKPQPNDIRGLSANQIVVFLEQVLVSEHQLTPELSRLMGEVYGLARSNNIEVANLYCQVGMKAGDESVLEPTIELLGKIGRMKFVRPLYRNLQKFNRQRAIETFQEYKDFYHPICRAMVEKDLFGKKEE.

A peptide-binding positions include 139 to 141 and 271 to 276; these read QCQ and PYGGME. A Zn(2+)-binding site is contributed by His300. Glu301 acts as the Proton acceptor in catalysis. Positions 304 and 323 each coordinate Zn(2+). Tyr389 serves as the catalytic Proton donor.

Belongs to the peptidase M1 family. Zn(2+) is required as a cofactor.

The protein localises to the cytoplasm. Its subcellular location is the nucleus. It carries out the reaction an epoxide + H2O = an ethanediol. Its function is as follows. Aminopeptidase that preferentially cleaves di- and tripeptides. Also has low epoxide hydrolase activity (in vitro). Can hydrolyze the epoxide leukotriene LTA(4) but it forms preferentially 5,6-dihydroxy-7,9,11,14-eicosatetraenoic acid rather than the cytokine leukotriene B(4) as the product compared to the homologous mammalian enzyme (in vitro). In Aspergillus clavatus (strain ATCC 1007 / CBS 513.65 / DSM 816 / NCTC 3887 / NRRL 1 / QM 1276 / 107), this protein is Leucine aminopeptidase 2.